Consider the following 119-residue polypeptide: MFSLKRQQGASFEHQARLFLESKGLIFIAANQNFKCGELDLIMNDKETIVFVEVRQRSHSAYGSAIESVDWRKQQKWLDAANLWLAKQNMSLEDANCRFDLIAFGKTPQDIQWIPNFLD.

This sequence belongs to the UPF0102 family.

This is UPF0102 protein HI_1656 from Haemophilus influenzae (strain ATCC 51907 / DSM 11121 / KW20 / Rd).